The primary structure comprises 218 residues: MKTHELKASPRTTRGNGPARALRREGFIPAVLYGPDSEPITLSVSHKDLSDILQGVGSSQVMFNLNIEGADAPRKAMIKELQTNVVSQRYLHADFYEISMDRKLHVMVPVVVEGKSKGMEEGGLLQVIRRELEVICLPGDIPEEFVIDVTELGIGEAVHLSDVPKGDAVEFPESADFTVVTVVAPTAAALPEEGEEGEEGEEGGEGGEAEGAEAASEE.

Disordered regions lie at residues 1-20 (MKTH…GPAR) and 185-218 (PTAA…ASEE). Over residues 192-218 (EEGEEGEEGEEGGEGGEAEGAEAASEE) the composition is skewed to acidic residues.

The protein belongs to the bacterial ribosomal protein bL25 family. CTC subfamily. In terms of assembly, part of the 50S ribosomal subunit; part of the 5S rRNA/L5/L18/L25 subcomplex. Contacts the 5S rRNA. Binds to the 5S rRNA independently of L5 and L18.

Functionally, this is one of the proteins that binds to the 5S RNA in the ribosome where it forms part of the central protuberance. This is Large ribosomal subunit protein bL25 from Desulfatibacillum aliphaticivorans.